The sequence spans 310 residues: Ribonuclease HIII (310 aa).

Residues 90-306 (FQCIGSDEAG…RKKAENLVQK (217 aa)) form the RNase H type-2 domain. 3 residues coordinate a divalent metal cation: D96, E97, and D201.

Belongs to the RNase HII family. RnhC subfamily. Requires Mn(2+) as cofactor. Mg(2+) serves as cofactor.

The protein localises to the cytoplasm. It carries out the reaction Endonucleolytic cleavage to 5'-phosphomonoester.. Functionally, endonuclease that specifically degrades the RNA of RNA-DNA hybrids. The sequence is that of Ribonuclease HIII from Staphylococcus saprophyticus subsp. saprophyticus (strain ATCC 15305 / DSM 20229 / NCIMB 8711 / NCTC 7292 / S-41).